The sequence spans 304 residues: Acetylglutamate kinase (304 aa).

Residues 77–78 (GG), R99, and N201 each bind substrate.

Belongs to the acetylglutamate kinase family. ArgB subfamily.

The protein localises to the cytoplasm. The catalysed reaction is N-acetyl-L-glutamate + ATP = N-acetyl-L-glutamyl 5-phosphate + ADP. It participates in amino-acid biosynthesis; L-arginine biosynthesis; N(2)-acetyl-L-ornithine from L-glutamate: step 2/4. Its function is as follows. Catalyzes the ATP-dependent phosphorylation of N-acetyl-L-glutamate. The chain is Acetylglutamate kinase from Methylibium petroleiphilum (strain ATCC BAA-1232 / LMG 22953 / PM1).